We begin with the raw amino-acid sequence, 293 residues long: Small ribosomal subunit protein uS5 (293 aa).

The interval 1-55 (MADDAGAAGGPGGPGGPGLGGRGGFRGGFGSGLRGRGRGRGRGRGRGRGARGGKA) is disordered. Alanine 2 is subject to N-acetylalanine. The span at 7–34 (AAGGPGGPGGPGLGGRGGFRGGFGSGLR) shows a compositional bias: gly residues. A run of 14 repeats spans residues 9 to 11 (GGP), 12 to 14 (GGP), 15 to 17 (GGP), 22 to 25 (RGGF), 26 to 29 (RGGF), 34 to 35 (RG), 36 to 37 (RG), 38 to 39 (RG), 40 to 41 (RG), 42 to 43 (RG), 44 to 45 (RG), 46 to 47 (RG), 48 to 49 (RG), and 51 to 52 (RG). Residues 9–17 (GGPGGPGGP) form a 3 X 3 AA tandem repeats of G-G-P region. The 2 X 4 AA tandem repeats of R-G-G-F stretch occupies residues 22–29 (RGGFRGGF). Residues 34-52 (RGRGRGRGRGRGRGRGARG) are 9 X 2 AA tandem repeats of R-G. A compositionally biased stretch (basic residues) spans 35–51 (GRGRGRGRGRGRGRGAR). Glycyl lysine isopeptide (Lys-Gly) (interchain with G-Cter in ubiquitin) cross-links involve residues lysine 54 and lysine 58. An S5 DRBM domain is found at 102–165 (LKDEVLKIMP…ILAKLSIVPV (64 aa)). A Phosphothreonine modification is found at threonine 252. Lysine 263 carries the post-translational modification N6-acetyllysine. A Phosphoserine modification is found at serine 264. Residue threonine 270 is modified to Phosphothreonine. Residue lysine 275 is modified to N6-acetyllysine; alternate. A Glycyl lysine isopeptide (Lys-Gly) (interchain with G-Cter in SUMO1); alternate cross-link involves residue lysine 275. Lysine 275 participates in a covalent cross-link: Glycyl lysine isopeptide (Lys-Gly) (interchain with G-Cter in SUMO2); alternate. Residue lysine 275 forms a Glycyl lysine isopeptide (Lys-Gly) (interchain with G-Cter in ubiquitin); alternate linkage. Serine 281 is subject to Phosphoserine.

Belongs to the universal ribosomal protein uS5 family. Component of the small ribosomal subunit. Interacts with zinc finger protein ZNF277 (via zinc-finger domains); the interaction is direct; the interaction is extra-ribosomal. Interaction with ZNF277 competes with the binding of RPS2 to protein arginine methyltransferase PRMT3. Citrullinated by PADI4 in the Arg/Gly-rich region. Post-translationally, asymmetric arginine dimethylation by PRMT3 occurs at multiple sites in the Arg/Gly-rich region. In terms of processing, monoubiquitinated at Lys-54 and Lys-58 by RNF10 when a ribosome has stalled during translation, leading to its degradation by the proteasome. Deubiquitinated at Lys-54 and Lys-58 by USP10, preventing degradation by the proteasome and promoting 40S ribosome subunit recycling following ribosome dissociation.

It is found in the cytoplasm. The protein localises to the nucleus. The protein resides in the nucleolus. In terms of biological role, component of the ribosome, a large ribonucleoprotein complex responsible for the synthesis of proteins in the cell. The small ribosomal subunit (SSU) binds messenger RNAs (mRNAs) and translates the encoded message by selecting cognate aminoacyl-transfer RNA (tRNA) molecules. The large subunit (LSU) contains the ribosomal catalytic site termed the peptidyl transferase center (PTC), which catalyzes the formation of peptide bonds, thereby polymerizing the amino acids delivered by tRNAs into a polypeptide chain. The nascent polypeptides leave the ribosome through a tunnel in the LSU and interact with protein factors that function in enzymatic processing, targeting, and the membrane insertion of nascent chains at the exit of the ribosomal tunnel. Plays a role in the assembly and function of the 40S ribosomal subunit. Mutations in this protein affects the control of translational fidelity. Involved in nucleolar processing of pre-18S ribosomal RNA and ribosome assembly. The polypeptide is Small ribosomal subunit protein uS5 (Rps2) (Rattus norvegicus (Rat)).